A 563-amino-acid polypeptide reads, in one-letter code: Nicalin (563 aa).

The N-terminal stretch at 1–29 (MQDEIIDFFRSPALLFYMTLMLTICVVNG) is a signal peptide. The Lumenal portion of the chain corresponds to 30 to 522 (SQQVGEVVET…NRLVAERVKP (493 aa)). A glycan (N-linked (GlcNAc...) asparagine) is linked at N232. A helical membrane pass occupies residues 523 to 543 (AVFELVIAAGVFTYLSAFYYI). Residues 544–563 (ATHSQNTIEGTVAAIRKSIF) are Cytoplasmic-facing.

Belongs to the nicastrin family. May interact with the levamisole-sensitive nicotinic acetylcholine receptor (L-AChR). May interact with nra-4 in the ER. In terms of tissue distribution, expressed in body wall, pharyngeal, and vulval muscles, excretory canal cell, head and motor neurons, and vulval epithelium.

It is found in the endoplasmic reticulum membrane. In terms of biological role, involved in the recognition and selection of protein complexes to exit the endoplasmic reticulum (ER). In muscles, regulates levamisole-sensitive nicotinic acetylcholine receptor (L-AChR) subunit composition, possibly by allowing only specific L-AChR subunit combinations to exit the ER. Specifically, may promote the inclusion of alpha subunits unc-38 and unc-29 into L-AChR. Regulates L-AChR sensitivity to agonists such as nicotine and levamisole at neuro-muscular junctions. In touch neurons, may prevent ER exit of incorrectly folded mec-4-mec-10 ion channel. The protein is Nicalin of Caenorhabditis elegans.